The primary structure comprises 211 residues: Claudin-7 (211 aa).

Over 1–7 (MANSGLQ) the chain is Cytoplasmic. Residues 8-28 (LLGFSMALLGWVGLVACTAIP) traverse the membrane as a helical segment. Over 29–81 (QWQMSSYAGDNIITAQAMYKGLWMDCVTQSTGMMSCKMYDSVLALSAALQATR) the chain is Extracellular. A helical transmembrane segment spans residues 82 to 102 (ALMVVSLVLGFLAMFVATMGM). Over 103–117 (KCTRCGGDDKVKKAR) the chain is Cytoplasmic. Residues 118–138 (IAMGGGIIFIVAGLAALVACS) form a helical membrane-spanning segment. Residues 139 to 160 (WYGHQIVTDFYNPLIPTNIKYE) are Extracellular-facing. Residues 161 to 181 (FGPAIFIGWAGSALVILGGAL) form a helical membrane-spanning segment. Over 182 to 211 (LSCSCPGNESKAGYRVPRSYPKSNSSKEYV) the chain is Cytoplasmic. The interval 210–211 (YV) is interactions with TJP1, TJP2 and TJP3.

It belongs to the claudin family. In terms of assembly, directly interacts with TJP1/ZO-1, TJP2/ZO-2 and TJP3/ZO-3. The phosphorylated form interacts with EPCAM. Does not interact with CD81. In terms of processing, phosphorylated. Expressed in kidney, lung and prostate. Isoform 1 seems to be predominant, except in some normal prostate samples, where isoform 2 is the major form. Down-regulated in breast cancers, including ductal carcinoma in situ (DCIS), lobular carcinoma in situ (LCIS) and invasive ductal carcinoma (IDC) (at protein level), as well as in several cancer cell lines. Loss of expression correlates with histological grade, occurring predominantly in high-grade lesions.

Its subcellular location is the cell membrane. It is found in the basolateral cell membrane. The protein resides in the cell junction. It localises to the tight junction. Its function is as follows. Plays a major role in tight junction-specific obliteration of the intercellular space. This Homo sapiens (Human) protein is Claudin-7 (CLDN7).